Consider the following 277-residue polypeptide: MSGFGDRLAGATARRGPLCLGIDPHPELLRAWGLGTDAAGLAGFSDICVAAFAGFAVVKPQVAFFEAYGSAGYAVLERTIAALRESGVLVLADAKRGDIGSTMAAYASAWAGDSPLAADAVTASPYLGFGSLQPLLDTAREHDRGVFVLAATSNPEGASVQCAVAPGAIPGRTVAQAIVDAAAEVNAGAARGSVGVVVGATLSAPPDVSALNGPVLVPGVGAQGGRPEALAGLGGARRGQLLPAVSREVLRAGPDVAALRAAAERMRDAVAYLGENP.

The Proton donor role is filled by Lys95.

This sequence belongs to the OMP decarboxylase family. Type 2 subfamily.

The catalysed reaction is orotidine 5'-phosphate + H(+) = UMP + CO2. Its pathway is pyrimidine metabolism; UMP biosynthesis via de novo pathway; UMP from orotate: step 2/2. The sequence is that of Orotidine 5'-phosphate decarboxylase from Mycolicibacterium vanbaalenii (strain DSM 7251 / JCM 13017 / BCRC 16820 / KCTC 9966 / NRRL B-24157 / PYR-1) (Mycobacterium vanbaalenii).